The sequence spans 101 residues: Small ribosomal subunit protein uS14 (101 aa).

This sequence belongs to the universal ribosomal protein uS14 family. Part of the 30S ribosomal subunit. Contacts proteins S3 and S10.

Its function is as follows. Binds 16S rRNA, required for the assembly of 30S particles and may also be responsible for determining the conformation of the 16S rRNA at the A site. The chain is Small ribosomal subunit protein uS14 from Photobacterium profundum (strain SS9).